Consider the following 62-residue polypeptide: Bowman-Birk type proteinase inhibitor B7 (62 aa).

5 cysteine pairs are disulfide-bonded: Cys5/Cys59, Cys6/Cys23, Cys13/Cys21, Cys30/Cys37, and Cys34/Cys51.

It belongs to the Bowman-Birk serine protease inhibitor family. In terms of tissue distribution, expressed in bulb (at protein level).

Functionally, serine protease inhibitor. Inhibits trypsin (Ki = 65 nM) and weakly inhibits chymotrypsin (Ki = 295 nM). Does not inhibit bacterial subtilisin. This Hyacinthus orientalis (Common hyacinth) protein is Bowman-Birk type proteinase inhibitor B7.